Consider the following 906-residue polypeptide: Protein translocase subunit SecA (906 aa).

ATP-binding positions include glutamine 86, 104–108, and aspartate 499; that span reads GEGKT. Residues 865-885 are disordered; that stretch reads VSRIDPKDRNPEDPTSWGRVS. Residues cysteine 890, cysteine 892, cysteine 901, and histidine 902 each coordinate Zn(2+).

It belongs to the SecA family. As to quaternary structure, monomer and homodimer. Part of the essential Sec protein translocation apparatus which comprises SecA, SecYEG and auxiliary proteins SecDF-YajC and YidC. It depends on Zn(2+) as a cofactor.

Its subcellular location is the cell inner membrane. It localises to the cytoplasm. The enzyme catalyses ATP + H2O + cellular proteinSide 1 = ADP + phosphate + cellular proteinSide 2.. Its function is as follows. Part of the Sec protein translocase complex. Interacts with the SecYEG preprotein conducting channel. Has a central role in coupling the hydrolysis of ATP to the transfer of proteins into and across the cell membrane, serving both as a receptor for the preprotein-SecB complex and as an ATP-driven molecular motor driving the stepwise translocation of polypeptide chains across the membrane. The protein is Protein translocase subunit SecA of Rickettsia canadensis (strain McKiel).